Here is a 37-residue protein sequence, read N- to C-terminus: Islet amyloid polypeptide (37 aa).

The cysteines at positions 2 and 7 are disulfide-linked. Tyrosine 37 carries the post-translational modification Tyrosine amide.

The protein belongs to the calcitonin family. Can form homodimers. Interacts with IDE and INS. Interaction with INS inhibits homodimerization and fibril formation.

It is found in the secreted. In terms of biological role, amylin/IAPP is a glucoregulatory peptide hormone that plays an important role in the regulation of energy homeostasis. Selectively inhibits insulin-stimulated glucose utilization and glycogen deposition in muscle, while not affecting adipocyte glucose metabolism. IAPP function is mediated by the CALCR-RAMPs (AMYRs) receptor complexes. Amylin can also bind CALCR receptor in the absence of RAMPs, although it is more selective for AMYRs. The sequence is that of Islet amyloid polypeptide (IAPP) from Cricetulus griseus (Chinese hamster).